Consider the following 216-residue polypeptide: Adenylate kinase (216 aa).

11-16 (GSGKGT) contributes to the ATP binding site. The segment at 31-60 (ATGDLFRKAIERGDELGDTVKSYMERGELV) is NMP. AMP-binding positions include Thr-32, Arg-37, 58-60 (ELV), 86-89 (GFPR), and Gln-93. Residues 127–163 (GRWVCRSCQSPYQCGCAEVAEGKCSRCQGELYQRPDD) are LID. Arg-128 is a binding site for ATP. Zn(2+) contacts are provided by Cys-131, Cys-134, Cys-150, and Cys-153. Positions 160 and 171 each coordinate AMP. Ala-199 contacts ATP.

Belongs to the adenylate kinase family. Monomer.

It is found in the cytoplasm. The catalysed reaction is AMP + ATP = 2 ADP. It participates in purine metabolism; AMP biosynthesis via salvage pathway; AMP from ADP: step 1/1. Its function is as follows. Catalyzes the reversible transfer of the terminal phosphate group between ATP and AMP. Plays an important role in cellular energy homeostasis and in adenine nucleotide metabolism. The sequence is that of Adenylate kinase from Dehalococcoides mccartyi (strain ATCC BAA-2266 / KCTC 15142 / 195) (Dehalococcoides ethenogenes (strain 195)).